A 106-amino-acid chain; its full sequence is Immunoglobulin lambda constant 1 (106 aa).

Residues 7 to 101 (PTVTLFPPSS…EGSTVEKTVA (95 aa)) enclose the Ig-like domain. A disulfide bridge connects residues C28 and C87.

In terms of assembly, immunoglobulins are composed of two identical heavy chains and two identical light chains; disulfide-linked.

It is found in the secreted. Its subcellular location is the cell membrane. Constant region of immunoglobulin light chains. Immunoglobulins, also known as antibodies, are membrane-bound or secreted glycoproteins produced by B lymphocytes. In the recognition phase of humoral immunity, the membrane-bound immunoglobulins serve as receptors which, upon binding of a specific antigen, trigger the clonal expansion and differentiation of B lymphocytes into immunoglobulins-secreting plasma cells. Secreted immunoglobulins mediate the effector phase of humoral immunity, which results in the elimination of bound antigens. The antigen binding site is formed by the variable domain of one heavy chain, together with that of its associated light chain. Thus, each immunoglobulin has two antigen binding sites with remarkable affinity for a particular antigen. The variable domains are assembled by a process called V-(D)-J rearrangement and can then be subjected to somatic hypermutations which, after exposure to antigen and selection, allow affinity maturation for a particular antigen. The polypeptide is Immunoglobulin lambda constant 1 (Homo sapiens (Human)).